The following is a 563-amino-acid chain: MAAIQANVTTGIPANANTITSSEPVRPLANFPPSVWGDRFLSFSLDKSELERHAIAMEKPKEDLRKLIVDPTMDSNEKLGLIYSVHRLGLTYMFMKEIESQLDKLFKEFSLQDCEEVDLYTISINFQVFRHLGYKLPSDVFNKFKDASSGTFRESITRDVKGMLGLYESAQLRTRGEKVLDEASVFIEGKLKSVVSTLEGNLAQQVKQSLRRPFHQGMPMIEARLYFSNYEEECSSHDSLFKLAKLHFKYLELQQKEELRIVTKWWKDMRFQETTPYIRDRVPEIYLWILGLYFEPRYSLARIIATKITLFLVVLDDTYDAYATIEEIRLLTDAINKWDISAMEQIPEYIRPFYKILLDEYAEIENIMAREGRANTVIASKEAFQDIARGYLEEAEWTNNGYVASFPEYMKNGLITSAYNVISKSALVGMGEIVSEDALAWYESHLKTLQASELISRLQDDVMTYQFERERGQSATGVDAFIKTYGVSEKKAIDELKIMIENAWKDINEGCLKPRQVSMDLLAPILNLARMIDVVYRYDDGFTFPGKTLKEYINLLFVGSLPM.

Positions 316, 320, 460, 464, and 468 each coordinate Mg(2+). Residues 316–320 carry the DDXXD motif motif; sequence DDTYD.

This sequence belongs to the terpene synthase family. Tpsa subfamily. The cofactor is Mg(2+). Mn(2+) is required as a cofactor. High expression in disk florets, moderate expression in ray florets and detected in leaves and stems, but not in roots.

It catalyses the reaction (2E,6E)-farnesyl diphosphate = (+)-(R)-germacrene A + diphosphate. It participates in secondary metabolite biosynthesis; terpenoid biosynthesis. In terms of biological role, sesquiterpene synthase involved in germacrene A biosynthesis. May be involved in the biosynthesis of the sesquiterpene lactone matricine, one of the major active compounds of chamomile flowers. In Matricaria chamomilla var. recutita (German chamomile), this protein is Germacrene-A synthase.